The following is a 302-amino-acid chain: Monopolin complex subunit MAM1 (302 aa).

2 disordered regions span residues 53–83 and 257–276; these read YHKEHSVKPKQNSGNVAAKEDKDTQHLQNNV and TSENPFSSSPNTKKIKSKGK. The segment covering 257–268 has biased composition (polar residues); that stretch reads TSENPFSSSPNT.

Component of the monopolin complex composed of at least CSM1, LRS4 and MAM1. The complex associates with the kinetochore during late pachytene. Post-translationally, phosphorylated by CDC5. This phosphorylation is required for the location to the kinetochores during late pachytene.

The protein localises to the nucleus. Its function is as follows. Component of the monopolin complex which promotes monoorientation during meiosis I, required for chromosome segregation during meiosis. This is Monopolin complex subunit MAM1 (MAM1) from Saccharomyces cerevisiae (strain ATCC 204508 / S288c) (Baker's yeast).